The following is a 485-amino-acid chain: Glutamyl-tRNA(Gln) amidotransferase subunit A (485 aa).

Active-site charge relay system residues include lysine 79 and serine 154. Residue serine 178 is the Acyl-ester intermediate of the active site.

This sequence belongs to the amidase family. GatA subfamily. In terms of assembly, heterotrimer of A, B and C subunits.

The catalysed reaction is L-glutamyl-tRNA(Gln) + L-glutamine + ATP + H2O = L-glutaminyl-tRNA(Gln) + L-glutamate + ADP + phosphate + H(+). Its function is as follows. Allows the formation of correctly charged Gln-tRNA(Gln) through the transamidation of misacylated Glu-tRNA(Gln) in organisms which lack glutaminyl-tRNA synthetase. The reaction takes place in the presence of glutamine and ATP through an activated gamma-phospho-Glu-tRNA(Gln). The sequence is that of Glutamyl-tRNA(Gln) amidotransferase subunit A from Staphylococcus haemolyticus (strain JCSC1435).